The chain runs to 183 residues: Ribosome maturation factor RimP (183 aa).

Belongs to the RimP family.

It localises to the cytoplasm. Required for maturation of 30S ribosomal subunits. This is Ribosome maturation factor RimP from Leptothrix cholodnii (strain ATCC 51168 / LMG 8142 / SP-6) (Leptothrix discophora (strain SP-6)).